The primary structure comprises 159 residues: MSQDPVIIHTDGGCRPNPGPGGWGAVLRHREHVREMFGGEAAVTSNNRMELTAPIMALEALTRPVTVHLYTDSTYVRNGITKWVLGWERNGWMTAAKQPVKNVDLWQRLQAACARHQVEWFWVKGHSGIGDNELADELATRGLQEAVGLTTSSAGTSLR.

An RNase H type-1 domain is found at 2–144; sequence SQDPVIIHTD…ADELATRGLQ (143 aa). Residues D11, E50, D72, and D136 each contribute to the Mg(2+) site.

The protein belongs to the RNase H family. As to quaternary structure, monomer. Mg(2+) serves as cofactor.

It is found in the cytoplasm. The enzyme catalyses Endonucleolytic cleavage to 5'-phosphomonoester.. Its function is as follows. Endonuclease that specifically degrades the RNA of RNA-DNA hybrids. This Mycolicibacterium smegmatis (strain ATCC 700084 / mc(2)155) (Mycobacterium smegmatis) protein is Ribonuclease H.